The chain runs to 204 residues: Guanylate kinase (204 aa).

Positions 5–184 constitute a Guanylate kinase-like domain; it reads GLLIVLSGPS…ACDKIKAIVL (180 aa). 12-19 is an ATP binding site; sequence GPSGVGKG.

Belongs to the guanylate kinase family.

Its subcellular location is the cytoplasm. The catalysed reaction is GMP + ATP = GDP + ADP. Functionally, essential for recycling GMP and indirectly, cGMP. This chain is Guanylate kinase (gmk), found in Bacillus subtilis (strain 168).